The primary structure comprises 425 residues: tRNA (guanine-N(7)-)-methyltransferase non-catalytic subunit wuho (425 aa).

The tract at residues 67-102 is disordered; that stretch reads ATCAGKEPGGKEQQLTKQPEEGGTTASGSGVTSTSV. The span at 88-102 shows a compositional bias: low complexity; that stretch reads GGTTASGSGVTSTSV. WD repeat units follow at residues 97–138, 142–181, 185–224, 228–266, and 325–365; these read VTST…ARLL, PLARAASAVRFCSDSSSVLVTDKTGDCYQYDCVELEAPPR, GHLSVVYDILWSEDQQHIITCDRDDKIRVTNYPATFDIHS, GHREFVSGLALLTDKHIASASGDKTLRVWNYIQGKELLQ, and AGSW…PATS.

It belongs to the WD repeat TRM82 family. As to quaternary structure, forms a heterodimer with the catalytic subunit Mettl1. Interacts with mei-P26 and weakly interacts with bgcn; required for the function or formation of the mei-P26-bgcn-bam-sxl complex. Interacts with nanos; may be involved in mei-P26-dependent derepression of the BMP signaling pathway. Interacts with Myc; the interaction may be mediated by mei-P26 and may be involved in the regulation of ribosome biogenesis. In terms of tissue distribution, in testis, it is present at high level in hub cells, a niche for germline stem cells of testis. Ubiquitously expressed in all testicular cells throughout spermatogenesis. Ubiquitously expressed in all germline and somatic cells of the ovary.

The protein localises to the nucleus. Its subcellular location is the cytoplasm. It functions in the pathway tRNA modification; N(7)-methylguanine-tRNA biosynthesis. Its function is as follows. Required for the Mettl1-dependent formation of N(7)-methylguanine at position 46 (m7G46) in tRNA. In the Mettl1-wuho methyltransferase complex, it is required to stabilize and induce conformational changes of the catalytic subunit. Required for binding of nanos mRNA and repression of translation by the mei-P26-bgcn-bam-sxl complex. May cooperate with mei-P26 and nanos to derepress the BMP signaling pathway. May cooperate with mei-P26 to suppress expression of a subset of microRNAs. May cooperate with mei-P26 to regulate bam expression levels in germline cells during gametogenesis. Required to promote mitosis to meiosis transition during gametogenesis. May regulate germline cell division in part by regulating ribosome biogenesis. The protein is tRNA (guanine-N(7)-)-methyltransferase non-catalytic subunit wuho of Drosophila yakuba (Fruit fly).